A 248-amino-acid polypeptide reads, in one-letter code: 2,3-bisphosphoglycerate-dependent phosphoglycerate mutase 2 (248 aa).

Substrate contacts are provided by residues 8–15 (RHGESAWN), 21–22 (TG), arginine 60, 87–90 (EKHY), lysine 98, 114–115 (RR), and 183–184 (GN). Histidine 9 functions as the Tele-phosphohistidine intermediate in the catalytic mechanism. Catalysis depends on glutamate 87, which acts as the Proton donor/acceptor.

This sequence belongs to the phosphoglycerate mutase family. BPG-dependent PGAM subfamily.

The catalysed reaction is (2R)-2-phosphoglycerate = (2R)-3-phosphoglycerate. It participates in carbohydrate degradation; glycolysis; pyruvate from D-glyceraldehyde 3-phosphate: step 3/5. Functionally, catalyzes the interconversion of 2-phosphoglycerate and 3-phosphoglycerate. The sequence is that of 2,3-bisphosphoglycerate-dependent phosphoglycerate mutase 2 from Bacteroides thetaiotaomicron (strain ATCC 29148 / DSM 2079 / JCM 5827 / CCUG 10774 / NCTC 10582 / VPI-5482 / E50).